The following is a 100-amino-acid chain: uncharacterized protein (100 aa).

Positions 1-17 (MTMKYFCSVMIAIALVG) are cleaved as a signal peptide. Cysteine 18 carries the N-palmitoyl cysteine lipid modification. The S-diacylglycerol cysteine moiety is linked to residue cysteine 18.

It localises to the cell membrane. This is an uncharacterized protein from Salmonella paratyphi A (strain ATCC 9150 / SARB42).